Consider the following 71-residue polypeptide: UPF0346 protein BCE_2336 (71 aa).

The protein belongs to the UPF0346 family.

The chain is UPF0346 protein BCE_2336 from Bacillus cereus (strain ATCC 10987 / NRS 248).